The following is a 776-amino-acid chain: V-set and immunoglobulin domain-containing protein 10-like 2 (776 aa).

Residues 1–28 (MVGLSAHHRPLGCRLLILFCLLHPGASG) form the signal peptide. Ig-like domains follow at residues 32-140 (PTSN…LYLM), 150-234 (PRVQ…AFLD), 242-324 (PVIT…TTVQ), 399-498 (PTLA…LRLE), and 500-592 (PQLT…VLLE). Disulfide bonds link C56-C122, C169-C217, C268-C308, C435-C480, and C521-C576. In terms of domain architecture, Fibronectin type-III spans 608–708 (TPPNVTISRL…EVKTPVDPAF (101 aa)). N-linked (GlcNAc...) asparagine glycans are attached at residues N611 and N637. A helical membrane pass occupies residues 713 to 733 (AVLGAAGTGVVVALATSLLVF).

It localises to the membrane. The protein is V-set and immunoglobulin domain-containing protein 10-like 2 of Mus musculus (Mouse).